The primary structure comprises 113 residues: Iron-sulfur cluster insertion protein ErpA (113 aa).

Iron-sulfur cluster-binding residues include cysteine 41, cysteine 105, and cysteine 107.

Belongs to the HesB/IscA family. Homodimer. The cofactor is iron-sulfur cluster.

Functionally, required for insertion of 4Fe-4S clusters for at least IspG. This Mannheimia succiniciproducens (strain KCTC 0769BP / MBEL55E) protein is Iron-sulfur cluster insertion protein ErpA.